The following is a 206-amino-acid chain: Ras-related protein RABG3c (206 aa).

15–22 (GDSGVGKT) lines the GTP pocket. The short motif at 37–45 (YKATIGADF) is the Effector region element. GTP-binding positions include 63–67 (DTAGQ), 125–128 (NKTD), and 158–159 (SA). S-geranylgeranyl cysteine attachment occurs at residues Cys-204 and Cys-206. Cys-206 is subject to Cysteine methyl ester.

This sequence belongs to the small GTPase superfamily. Rab family.

The protein resides in the cell membrane. Intracellular vesicle trafficking and protein transport. This chain is Ras-related protein RABG3c (RABG3C), found in Arabidopsis thaliana (Mouse-ear cress).